The sequence spans 638 residues: 1-deoxy-D-xylulose-5-phosphate synthase (638 aa).

Thiamine diphosphate contacts are provided by residues H81 and 122–124; that span reads GHS. D153 serves as a coordination point for Mg(2+). Thiamine diphosphate-binding positions include 154–155, N182, Y293, and E377; that span reads GS. Position 182 (N182) interacts with Mg(2+).

It belongs to the transketolase family. DXPS subfamily. In terms of assembly, homodimer. Requires Mg(2+) as cofactor. Thiamine diphosphate is required as a cofactor.

The catalysed reaction is D-glyceraldehyde 3-phosphate + pyruvate + H(+) = 1-deoxy-D-xylulose 5-phosphate + CO2. The protein operates within metabolic intermediate biosynthesis; 1-deoxy-D-xylulose 5-phosphate biosynthesis; 1-deoxy-D-xylulose 5-phosphate from D-glyceraldehyde 3-phosphate and pyruvate: step 1/1. In terms of biological role, catalyzes the acyloin condensation reaction between C atoms 2 and 3 of pyruvate and glyceraldehyde 3-phosphate to yield 1-deoxy-D-xylulose-5-phosphate (DXP). The protein is 1-deoxy-D-xylulose-5-phosphate synthase of Oleidesulfovibrio alaskensis (strain ATCC BAA-1058 / DSM 17464 / G20) (Desulfovibrio alaskensis).